Reading from the N-terminus, the 235-residue chain is Large ribosomal subunit protein uL4 (235 aa).

The interval 45–75 (RAGTASTKTRGEVSGGGRKPWPQKHTGRARH) is disordered. The span at 65-75 (WPQKHTGRARH) shows a compositional bias: basic residues.

It belongs to the universal ribosomal protein uL4 family. Part of the 50S ribosomal subunit.

Functionally, one of the primary rRNA binding proteins, this protein initially binds near the 5'-end of the 23S rRNA. It is important during the early stages of 50S assembly. It makes multiple contacts with different domains of the 23S rRNA in the assembled 50S subunit and ribosome. In terms of biological role, forms part of the polypeptide exit tunnel. This chain is Large ribosomal subunit protein uL4, found in Thermotoga petrophila (strain ATCC BAA-488 / DSM 13995 / JCM 10881 / RKU-1).